We begin with the raw amino-acid sequence, 198 residues long: Guanylate kinase (198 aa).

The Guanylate kinase-like domain maps to P4–S186. G14–T19 provides a ligand contact to ATP. Residue S37 to K51 coordinates substrate. Residues R44, R137, and R148 contribute to the active site. N171–D172 lines the ATP pocket.

This sequence belongs to the guanylate kinase family. As to quaternary structure, monomer. Interacts with RD3. As to expression, widely expressed. In retina is expressed in inner segment, outer nuclear layer, outer plexiform layer, inner plexiform layer, and ganglion cell layer (at protein level).

It localises to the photoreceptor inner segment. Its subcellular location is the cytoplasm. The protein resides in the cytosol. The protein localises to the mitochondrion. The enzyme catalyses GMP + ATP = GDP + ADP. Its function is as follows. Catalyzes the phosphorylation of GMP to GDP. Essential enzyme for recycling GMP and indirectly, cyclic GMP (cGMP). Involved in the cGMP metabolism in photoreceptors. The protein is Guanylate kinase of Mus musculus (Mouse).